A 246-amino-acid polypeptide reads, in one-letter code: Flavin-dependent thymidylate synthase (246 aa).

The 225-residue stretch at I17–N241 folds into the ThyX domain. FAD is bound by residues S69, R92–R94, and E101. Residues E89–R92, E101–R105, and R173 contribute to the dUMP site. A ThyX motif motif is present at residues R92–S103. Residues N189 to R191 and H195 each bind FAD. R200 is a binding site for dUMP. Residue R200 is the Involved in ionization of N3 of dUMP, leading to its activation of the active site.

This sequence belongs to the thymidylate synthase ThyX family. Homotetramer. FAD is required as a cofactor.

The catalysed reaction is dUMP + (6R)-5,10-methylene-5,6,7,8-tetrahydrofolate + NADPH + H(+) = dTMP + (6S)-5,6,7,8-tetrahydrofolate + NADP(+). It participates in pyrimidine metabolism; dTTP biosynthesis. Its function is as follows. Catalyzes the reductive methylation of 2'-deoxyuridine-5'-monophosphate (dUMP) to 2'-deoxythymidine-5'-monophosphate (dTMP) while utilizing 5,10-methylenetetrahydrofolate (mTHF) as the methyl donor, and NADPH and FADH(2) as the reductant. The chain is Flavin-dependent thymidylate synthase from Streptomyces coelicolor (strain ATCC BAA-471 / A3(2) / M145).